Here is a 241-residue protein sequence, read N- to C-terminus: DNA repair protein RecO (241 aa).

Belongs to the RecO family.

In terms of biological role, involved in DNA repair and RecF pathway recombination. The chain is DNA repair protein RecO from Orientia tsutsugamushi (strain Boryong) (Rickettsia tsutsugamushi).